The sequence spans 465 residues: MTAQDYVVKDIALAAYGRKELDIAETEMPGLMACREEFSSSQPLRGARISGSLHMTIQTAVLIETLKAIGANVRWSSSNIFSTQDHAAAAIAATGTPVFAVKGETLEEYWTYIDAIFQWPDGNPSNLILDDGADATNYILMGSRAETNKDILSHPKTEEEELFFKQIQRRMEATPGFFTRQRAAIKGISEETTTGVHRLHQLQKEGLLPFPAININDSVTKSKFDNKYGCRESLVDGIRRATDVMIAGKTAIVCGYGDVGKGSAASLSGAGARVKVTEIDPICALQAAMDGYEVVNLDDAASSADIIITTTGNKDIVRLDHMRKVKDMCILGNIGHFDNEIQVAALQNLPWTNIKPQVDMITFPDGKRIILLSEGRLLNLGNATGHPSFVMSASFTNQVLAQIELFTRSGHYKNEVTVLPKYLDEKVARLHLDQLGIKLTTLSQEQAAYIGVTPQGPYKPDHYRY.

Substrate contacts are provided by Thr-56, Asp-131, and Glu-191. Residue 192 to 194 (TTT) coordinates NAD(+). Lys-221 and Asp-225 together coordinate substrate. NAD(+) is bound by residues Asn-226, 255 to 260 (GYGDVG), Glu-278, Asn-313, 334 to 336 (IGH), and Asn-379.

It belongs to the adenosylhomocysteinase family. Requires NAD(+) as cofactor.

It localises to the cytoplasm. The enzyme catalyses S-adenosyl-L-homocysteine + H2O = L-homocysteine + adenosine. It functions in the pathway amino-acid biosynthesis; L-homocysteine biosynthesis; L-homocysteine from S-adenosyl-L-homocysteine: step 1/1. May play a key role in the regulation of the intracellular concentration of adenosylhomocysteine. This is Adenosylhomocysteinase from Bartonella henselae (strain ATCC 49882 / DSM 28221 / CCUG 30454 / Houston 1) (Rochalimaea henselae).